A 63-amino-acid chain; its full sequence is Protein Wfdc21 (63 aa).

A signal peptide spans M1–A24. The WAP; atypical domain occupies A25–N63. Disulfide bonds link C35–C56, C39–C51, and C45–C60.

Predominantly expressed in white adipose tissue and liver.

It is found in the secreted. In terms of biological role, may promote activation of the metalloproteinase MMP2. This is Protein Wfdc21 from Mus musculus (Mouse).